The following is a 1407-amino-acid chain: Clustered mitochondria protein (1407 aa).

Over residues 1 to 12 the composition is skewed to basic residues; sequence MAGKSNKSKAKR. 2 disordered regions span residues 1–36 and 83–103; these read MAGKSNKSKAKRAAQSTTTNSTTDVKSDAPAPPVAA and IPKADESESQVENNDAQPKQG. Polar residues predominate over residues 14 to 24; the sequence is AQSTTTNSTTD. The region spanning 384–670 is the Clu domain; it reads PDHKRDAARA…RVTPRDANYT (287 aa). The interval 724 to 760 is disordered; that stretch reads IDGEANGASNSDQKSISDKQNTTAEDYAAGSSESSKS. Positions 730 to 747 are enriched in polar residues; the sequence is GASNSDQKSISDKQNTTA. TPR repeat units lie at residues 1025–1058, 1067–1100, 1109–1142, 1151–1184, and 1193–1226; these read AKDLVEMGKVQLAEGMLSESYTFFSEAFSILQQV, ANCCRYLAMVLYHAGDMAGAIMQQHKELIINERC, AHSYGNMALFYHGLNQTELALQNMGRALLLLGLS, AATFINVAMMYQDMGKMDTALRYLQEALKKNERL, and AVCYHALAIAFNCMGAFKLSHQHEKKTYDILVKQ. A disordered region spans residues 1358-1407; the sequence is VSSEKGGENGEAKVQEKKESSENGKTENLAPAGLGAGLTSLDKKKQKAKK. Basic and acidic residues predominate over residues 1362–1382; the sequence is KGGENGEAKVQEKKESSENGK.

This sequence belongs to the CLU family.

It is found in the cytoplasm. Functionally, mRNA-binding protein involved in proper cytoplasmic distribution of mitochondria. Together with REC2, REC3 and FMT/CLU, contributes to the establishment of the cellular volume devoted to the chloroplast compartment. The protein is Clustered mitochondria protein of Arabidopsis thaliana (Mouse-ear cress).